The following is a 119-amino-acid chain: Holo-[acyl-carrier-protein] synthase (119 aa).

Residues aspartate 8 and glutamate 53 each contribute to the Mg(2+) site.

This sequence belongs to the P-Pant transferase superfamily. AcpS family. Requires Mg(2+) as cofactor.

It localises to the cytoplasm. The enzyme catalyses apo-[ACP] + CoA = holo-[ACP] + adenosine 3',5'-bisphosphate + H(+). Transfers the 4'-phosphopantetheine moiety from coenzyme A to a Ser of acyl-carrier-protein. This chain is Holo-[acyl-carrier-protein] synthase, found in Petrotoga mobilis (strain DSM 10674 / SJ95).